Consider the following 204-residue polypeptide: Leucyl/phenylalanyl-tRNA--protein transferase (204 aa).

Belongs to the L/F-transferase family.

The protein localises to the cytoplasm. The catalysed reaction is N-terminal L-lysyl-[protein] + L-leucyl-tRNA(Leu) = N-terminal L-leucyl-L-lysyl-[protein] + tRNA(Leu) + H(+). The enzyme catalyses N-terminal L-arginyl-[protein] + L-leucyl-tRNA(Leu) = N-terminal L-leucyl-L-arginyl-[protein] + tRNA(Leu) + H(+). It carries out the reaction L-phenylalanyl-tRNA(Phe) + an N-terminal L-alpha-aminoacyl-[protein] = an N-terminal L-phenylalanyl-L-alpha-aminoacyl-[protein] + tRNA(Phe). Functionally, functions in the N-end rule pathway of protein degradation where it conjugates Leu, Phe and, less efficiently, Met from aminoacyl-tRNAs to the N-termini of proteins containing an N-terminal arginine or lysine. In Rhizobium etli (strain ATCC 51251 / DSM 11541 / JCM 21823 / NBRC 15573 / CFN 42), this protein is Leucyl/phenylalanyl-tRNA--protein transferase.